The following is a 248-amino-acid chain: 2,3-bisphosphoglycerate-dependent phosphoglycerate mutase (248 aa).

Residues 8–15 (RHGESEWN), 21–22 (TG), Arg60, 87–90 (ERHY), Lys98, 114–115 (RR), and 183–184 (GN) each bind substrate. The Tele-phosphohistidine intermediate role is filled by His9. Glu87 acts as the Proton donor/acceptor in catalysis.

It belongs to the phosphoglycerate mutase family. BPG-dependent PGAM subfamily.

It catalyses the reaction (2R)-2-phosphoglycerate = (2R)-3-phosphoglycerate. Its pathway is carbohydrate degradation; glycolysis; pyruvate from D-glyceraldehyde 3-phosphate: step 3/5. In terms of biological role, catalyzes the interconversion of 2-phosphoglycerate and 3-phosphoglycerate. This Borrelia garinii subsp. bavariensis (strain ATCC BAA-2496 / DSM 23469 / PBi) (Borreliella bavariensis) protein is 2,3-bisphosphoglycerate-dependent phosphoglycerate mutase.